A 547-amino-acid chain; its full sequence is Intercellular adhesion molecule 3 (547 aa).

Positions 1-29 (MATMVPSVLWPRACWTLLVCCLLTPGVQG) are cleaved as a signal peptide. The Extracellular segment spans residues 30 to 485 (QEFLLRVEPQ…VMDIEAGSSH (456 aa)). The 58-residue stretch at 46-103 (GGSLFVNCSTDCPSSEKIALETSLSKELVASGMGWAAFNLSNVTGNSRILCSVYCNGS) folds into the Ig-like C2-type 1 domain. 6 N-linked (GlcNAc...) asparagine glycosylation sites follow: Asn52, Asn84, Asn87, Asn101, Asn110, and Asn134. 2 disulfides stabilise this stretch: Cys53–Cys96 and Cys57–Cys100. The 66-residue stretch at 132-197 (GQNFTLRCQV…FSCRTELDMQ (66 aa)) folds into the Ig-like C2-type 2 domain. Cys139 and Cys190 are disulfide-bonded. Residues Asn206, Asn264, Asn295, Asn308, Asn320, Asn363, Asn389, Asn453, and Asn457 are each glycosylated (N-linked (GlcNAc...) asparagine). The Ig-like C2-type 3 domain maps to 234–301 (ETSWPVDCTL…IVCNVTLGGE (68 aa)). Cys241 and Cys294 are oxidised to a cystine. The region spanning 329 to 382 (GSTVTVSCMAGARVQVTLDGVPAAAPGQPAQLQLNATESDDGRSFFCSATLEVD) is the Ig-like C2-type 4 domain. Cys336 and Cys375 are disulfide-bonded. In terms of domain architecture, Ig-like C2-type 5 spans 416-469 (KTRHVLQCQARGNPYPELRCLKEGSSREVPVGIPFFVNVTHNGTYQCQASSSRG). The cysteines at positions 423 and 462 are disulfide-linked. A helical transmembrane segment spans residues 486-510 (FVPVFVAVLLTLGVVTIVLALMYVF). The Cytoplasmic segment spans residues 511–547 (REHQRSGSYHVREESTYLPLTSMQPTEAMGEEPSRAE).

It belongs to the immunoglobulin superfamily. ICAM family. In terms of assembly, interacts with moesin/MSN. Upon stimulation by a physiologic stimuli becomes rapidly and transiently phosphorylated on serine residues. Post-translationally, N-glycosylated; glycans consist of a mixture of tri- and tetra-antennary complex-type chains and high-mannose chains. As to expression, leukocytes.

It localises to the membrane. ICAM proteins are ligands for the leukocyte adhesion protein LFA-1 (integrin alpha-L/beta-2). ICAM3 is also a ligand for integrin alpha-D/beta-2. In association with integrin alpha-L/beta-2, contributes to apoptotic neutrophil phagocytosis by macrophages. The polypeptide is Intercellular adhesion molecule 3 (ICAM3) (Homo sapiens (Human)).